A 479-amino-acid chain; its full sequence is Glutamyl-tRNA(Gln) amidotransferase subunit A (479 aa).

Residues Lys-71 and Ser-146 each act as charge relay system in the active site. Ser-170 serves as the catalytic Acyl-ester intermediate.

It belongs to the amidase family. GatA subfamily. In terms of assembly, heterotrimer of A, B and C subunits.

The catalysed reaction is L-glutamyl-tRNA(Gln) + L-glutamine + ATP + H2O = L-glutaminyl-tRNA(Gln) + L-glutamate + ADP + phosphate + H(+). Its function is as follows. Allows the formation of correctly charged Gln-tRNA(Gln) through the transamidation of misacylated Glu-tRNA(Gln) in organisms which lack glutaminyl-tRNA synthetase. The reaction takes place in the presence of glutamine and ATP through an activated gamma-phospho-Glu-tRNA(Gln). In Lactobacillus johnsonii (strain CNCM I-12250 / La1 / NCC 533), this protein is Glutamyl-tRNA(Gln) amidotransferase subunit A.